Here is a 158-residue protein sequence, read N- to C-terminus: Cyclic pyranopterin monophosphate synthase (158 aa).

Substrate is bound by residues 73–75 and 110–111; these read LCH and ME. Asp-125 is a catalytic residue.

Belongs to the MoaC family. Homohexamer; trimer of dimers.

The catalysed reaction is (8S)-3',8-cyclo-7,8-dihydroguanosine 5'-triphosphate = cyclic pyranopterin phosphate + diphosphate. Its pathway is cofactor biosynthesis; molybdopterin biosynthesis. Catalyzes the conversion of (8S)-3',8-cyclo-7,8-dihydroguanosine 5'-triphosphate to cyclic pyranopterin monophosphate (cPMP). This is Cyclic pyranopterin monophosphate synthase from Azotobacter vinelandii (strain DJ / ATCC BAA-1303).